The sequence spans 804 residues: Phenylalanine--tRNA ligase beta subunit (804 aa).

The 111-residue stretch at 38–148 (RAAFRAFTIA…ENAPVGTSFA (111 aa)) folds into the tRNA-binding domain. Residues 401–476 (HTARVIDFPV…RIHGINRIDP (76 aa)) form the B5 domain. Mg(2+) contacts are provided by D454, D460, E463, and E464. The region spanning 710-803 (SLFQSLKRDY…VAKQTGGVLR (94 aa)) is the FDX-ACB domain.

This sequence belongs to the phenylalanyl-tRNA synthetase beta subunit family. Type 1 subfamily. In terms of assembly, tetramer of two alpha and two beta subunits. The cofactor is Mg(2+).

It is found in the cytoplasm. The enzyme catalyses tRNA(Phe) + L-phenylalanine + ATP = L-phenylalanyl-tRNA(Phe) + AMP + diphosphate + H(+). In Brucella abortus (strain 2308), this protein is Phenylalanine--tRNA ligase beta subunit.